A 550-amino-acid polypeptide reads, in one-letter code: Methionine--tRNA ligase (550 aa).

Positions 13 to 23 (PYANGPLHFGH) match the 'HIGH' region motif. Zn(2+)-binding residues include Cys-145, Cys-148, Cys-158, and Cys-161. Residues 331–335 (QFSKS) carry the 'KMSKS' region motif. ATP is bound at residue Lys-334.

It belongs to the class-I aminoacyl-tRNA synthetase family. MetG type 1 subfamily. Monomer. Requires Zn(2+) as cofactor.

The protein resides in the cytoplasm. It carries out the reaction tRNA(Met) + L-methionine + ATP = L-methionyl-tRNA(Met) + AMP + diphosphate. Functionally, is required not only for elongation of protein synthesis but also for the initiation of all mRNA translation through initiator tRNA(fMet) aminoacylation. The polypeptide is Methionine--tRNA ligase (metG) (Chlamydia muridarum (strain MoPn / Nigg)).